The primary structure comprises 104 residues: UPF0235 protein RBE_0633 (104 aa).

The protein belongs to the UPF0235 family.

This chain is UPF0235 protein RBE_0633, found in Rickettsia bellii (strain RML369-C).